Consider the following 280-residue polypeptide: tRNA dimethylallyltransferase (280 aa).

Position 9-16 (9-16 (GPTGSGKT)) interacts with ATP. 11-16 (TGSGKT) provides a ligand contact to substrate. An interaction with substrate tRNA region spans residues 34 to 37 (DSVS).

This sequence belongs to the IPP transferase family. Monomer. Requires Mg(2+) as cofactor.

The enzyme catalyses adenosine(37) in tRNA + dimethylallyl diphosphate = N(6)-dimethylallyladenosine(37) in tRNA + diphosphate. Functionally, catalyzes the transfer of a dimethylallyl group onto the adenine at position 37 in tRNAs that read codons beginning with uridine, leading to the formation of N6-(dimethylallyl)adenosine (i(6)A). This chain is tRNA dimethylallyltransferase, found in Acholeplasma laidlawii (strain PG-8A).